Reading from the N-terminus, the 61-residue chain is MICHNQQSSQPPTIKTCPGETNCYKKRWRDHRGTIIERGCGCPSVKKGVGIYCCKTNKCNR.

Disulfide bonds link cysteine 3–cysteine 23, cysteine 17–cysteine 40, cysteine 42–cysteine 53, and cysteine 54–cysteine 59.

Belongs to the three-finger toxin family. Short-chain subfamily. Type I alpha-neurotoxin sub-subfamily. As to expression, expressed by the venom gland.

The protein localises to the secreted. Binds to muscle nicotinic acetylcholine receptor (nAChR) and inhibit acetylcholine from binding to the receptor, thereby impairing neuromuscular transmission. This Naja annulifera (Banded Egyptian cobra) protein is Short neurotoxin 2.